The chain runs to 1464 residues: Collagen alpha-1(I) chain (1464 aa).

Positions 1–22 (MFSFVDLRLLLLLAATALLTHG) are cleaved as a signal peptide. Residues 23–161 (QEEGQVEGQD…PPGLGGNFAP (139 aa)) constitute a propeptide, N-terminal propeptide. The VWFC domain maps to 38-96 (ITCVQNGLRYHDRDVWKPEPCRICVCDNGKVLCDDVICDETKNCPGAEVPEGECCPVCP). Positions 98–1214 (GSESPTDQET…PQEKAHDGGR (1117 aa)) are disordered. The segment covering 138–153 (PGLPGPPGPPGPPGPP) has biased composition (pro residues). Glutamine 162 carries the post-translational modification Pyrrolidone carboxylic acid. The nonhelical region (N-terminal) stretch occupies residues 162 to 178 (QLSYGYDEKSTGGISVP). An Allysine modification is found at lysine 170. Serine 171 carries the post-translational modification Phosphoserine. A triple-helical region region spans residues 179–1192 (GPMGPSGPRG…PGPPGPPGPP (1014 aa)). Proline 190, proline 193, proline 196, proline 205, proline 208, proline 211, proline 226, proline 241, proline 247, proline 256, and proline 262 each carry 4-hydroxyproline. The segment covering 198–217 (PQGFQGPPGEPGEPGASGPM) has biased composition (low complexity). Residues 229–243 (NGDDGEAGKPGRPGE) show a composition bias toward basic and acidic residues. At lysine 265 the chain carries 5-hydroxylysine; alternate. Lysine 265 is a glycosylation site (O-linked (Gal...) hydroxylysine; alternate). Serine 271 is subject to Phosphoserine. Positions 279 to 295 (DAGPAGPKGEPGSPGEN) are enriched in low complexity. Proline 289, proline 292, proline 298, proline 307, and proline 313 each carry 4-hydroxyproline. Low complexity predominate over residues 318–331 (PAGARGNDGATGAA). The span at 333 to 345 (PPGPTGPAGPPGF) shows a compositional bias: pro residues. Proline 334, proline 343, proline 346, proline 373, proline 376, proline 388, proline 394, proline 403, proline 409, proline 412, and proline 427 each carry 4-hydroxyproline. Residues 379 to 418 (AGAAGPAGNPGADGQPGAKGANGAPGIAGAPGFPGARGPS) are compositionally biased toward low complexity. Position 430 is a 5-hydroxylysine (lysine 430). 4-hydroxyproline occurs at positions 436, 439, 451, 460, 475, 481, 490, and 496. A compositionally biased stretch (low complexity) spans 448–457 (KGEPGPVGVQ). Positions 485–494 (GERGGPGSRG) are enriched in gly residues. The residue at position 505 (lysine 505) is a 5-hydroxylysine. 28 positions are modified to 4-hydroxyproline: proline 514, proline 523, proline 529, proline 535, proline 544, proline 547, proline 556, proline 565, proline 571, proline 583, proline 592, proline 601, proline 604, proline 622, proline 640, proline 646, proline 652, proline 658, proline 664, proline 670, proline 682, proline 691, proline 703, proline 715, proline 718, proline 724, proline 730, and proline 739. The span at 538-564 (KGLTGSPGSPGPDGKTGPPGPAGQDGR) shows a compositional bias: low complexity. The span at 573-592 (ARGQAGVMGFPGPKGAAGEP) shows a compositional bias: low complexity. The span at 634-661 (QGPAGSPGFQGLPGPAGPPGEAGKPGEQ) shows a compositional bias: low complexity. A compositionally biased stretch (low complexity) spans 696-724 (PRGANGAPGNDGAKGDAGAPGAPGSQGAP). A Cell attachment site motif is present at residues 745 to 747 (RGD). Lysine 751 is modified (5-hydroxylysine). A 4-hydroxyproline mark is found at proline 757, proline 772, and proline 778. Over residues 784-798 (SGPSGPAGPTGARGA) the composition is skewed to low complexity. Serine 787 is subject to Phosphoserine. Residues proline 799, proline 805, proline 808, proline 817, proline 823, proline 841, proline 850, and proline 859 each carry the 4-hydroxyproline modification. A compositionally biased stretch (low complexity) spans 811–838 (AGFAGPPGADGQPGAKGEPGDAGAKGDA). Pro residues predominate over residues 840–852 (PPGPAGPAGPPGP). Positions 853 to 883 (IGNVGAPGAKGARGSAGPPGATGFPGAAGRV) are enriched in low complexity. Position 862 is a 5-hydroxylysine (lysine 862). A 4-hydroxyproline mark is found at proline 871 and proline 877. Proline 885 is subject to 3-hydroxyproline. Proline 886, proline 895, proline 898, proline 919, proline 928, proline 937, proline 946, proline 964, proline 973, proline 976, proline 982, proline 997, proline 1003, proline 1009, proline 1018, and proline 1024 each carry 4-hydroxyproline. The segment covering 912–921 (ETGPAGRPGE) has biased composition (low complexity). A compositionally biased stretch (low complexity) spans 931–955 (AGEKGSPGADGPAGAPGTPGPQGIA). Positions 996–1006 (PPGPMGPPGLA) are enriched in pro residues. Lysine 1033 is modified (5-hydroxylysine). A compositionally biased stretch (pro residues) spans 1042–1057 (AGPPGAPGAPGAPGPV). 4-hydroxyproline occurs at positions 1045, 1048, and 1051. The segment covering 1078–1092 (VGPVGARGPAGPQGP) has biased composition (low complexity). Positions 1093 to 1095 (RGD) match the Cell attachment site motif. Residues 1093 to 1107 (RGDKGETGEQGDRGI) are compositionally biased toward basic and acidic residues. 5-hydroxylysine is present on lysine 1096. Lysine 1108 bears the 5-hydroxylysine; alternate mark. An O-linked (Gal...) hydroxylysine; alternate glycan is attached at lysine 1108. Residues proline 1120, proline 1123, proline 1126, proline 1144, and proline 1159 each carry the 4-hydroxyproline modification. A compositionally biased stretch (low complexity) spans 1126–1159 (PGEQGPSGASGPAGPRGPPGSAGAPGKDGLNGLP). Proline 1164 carries the post-translational modification 3-hydroxyproline. Residue proline 1165 is modified to 4-hydroxyproline. Residues 1177–1192 (VGPPGPPGPPGPPGPP) show a composition bias toward pro residues. At proline 1179 the chain carries 3-hydroxyproline. 4-hydroxyproline is present on proline 1180. Proline 1182 carries the 3-hydroxyproline modification. Proline 1183 is modified (4-hydroxyproline). The residue at position 1185 (proline 1185) is a 3-hydroxyproline. 4-hydroxyproline occurs at positions 1186, 1189, and 1192. The nonhelical region (C-terminal) stretch occupies residues 1193-1218 (SAGFDFSFLPQPPQEKAHDGGRYYRA). Lysine 1208 carries the allysine modification. A propeptide spans 1219-1464 (DDANVVRDRD…GFDVGPVCFL (246 aa)) (C-terminal propeptide). In terms of domain architecture, Fibrillar collagen NC1 spans 1229–1464 (LEVDTTLKSL…GFDVGPVCFL (236 aa)). Intrachain disulfides connect cysteine 1259–cysteine 1291, cysteine 1299–cysteine 1462, and cysteine 1370–cysteine 1415. The Ca(2+) site is built by aspartate 1277, asparagine 1279, glutamine 1280, cysteine 1282, and aspartate 1285. N-linked (GlcNAc...) asparagine glycosylation is present at asparagine 1365.

This sequence belongs to the fibrillar collagen family. Trimers of one alpha 2(I) and two alpha 1(I) chains. Interacts with MRC2. Interacts with TRAM2. Interacts with MFAP4 in a Ca (2+)-dependent manner. Contains mostly 4-hydroxyproline. Proline residues at the third position of the tripeptide repeating unit (G-X-Y) are hydroxylated in some or all of the chains. Post-translationally, contains 3-hydroxyproline at a few sites. This modification occurs on the first proline residue in the sequence motif Gly-Pro-Hyp, where Hyp is 4-hydroxyproline. In terms of processing, lysine residues at the third position of the tripeptide repeating unit (G-X-Y) are 5-hydroxylated in some or all of the chains. O-glycosylated on hydroxylated lysine residues. The O-linked glycan consists of a Glc-Gal disaccharide. As to expression, forms the fibrils of tendon, ligaments and bones. In bones the fibrils are mineralized with calcium hydroxyapatite.

Its subcellular location is the secreted. It is found in the extracellular space. It localises to the extracellular matrix. Functionally, type I collagen is a member of group I collagen (fibrillar forming collagen). This Homo sapiens (Human) protein is Collagen alpha-1(I) chain (COL1A1).